The chain runs to 138 residues: MSGIAVSDDCVQKFNELKLGHQHRYVTFKMNASNTEVVVEHVGGPNATYEDFKSQLPERDCRYAIFDYEFQVDGGQRNKITFILWAPDSAPIKSKMMYTSTKDSIKKKLVGIQVEVQATDAAEISEDAVSERAKKDVK.

S2 carries the blocked amino end (Ser) modification. Positions 3–134 (GIAVSDDCVQ…SEDAVSERAK (132 aa)) constitute an ADF-H domain.

The protein belongs to the actin-binding proteins ADF family. In terms of assembly, monomer.

The protein localises to the cytoplasm. In terms of biological role, forms a one to one complex with monomeric actin. Can regulate the pool available for polymerization. Severs actin filaments in a dose-dependent manner. The sequence is that of Actophorin from Acanthamoeba castellanii (Amoeba).